Here is a 225-residue protein sequence, read N- to C-terminus: 3-dehydroquinate dehydratase (225 aa).

3-dehydroquinate contacts are provided by residues 30–32 (EWR) and Arg-62. His-118 serves as the catalytic Proton donor/acceptor. The Schiff-base intermediate with substrate role is filled by Lys-143. Positions 186, 205, and 209 each coordinate 3-dehydroquinate.

Belongs to the type-I 3-dehydroquinase family. In terms of assembly, homodimer.

The enzyme catalyses 3-dehydroquinate = 3-dehydroshikimate + H2O. Its pathway is metabolic intermediate biosynthesis; chorismate biosynthesis; chorismate from D-erythrose 4-phosphate and phosphoenolpyruvate: step 3/7. Involved in the third step of the chorismate pathway, which leads to the biosynthesis of aromatic amino acids. Catalyzes the cis-dehydration of 3-dehydroquinate (DHQ) and introduces the first double bond of the aromatic ring to yield 3-dehydroshikimate. This is 3-dehydroquinate dehydratase from Streptococcus thermophilus (strain ATCC BAA-491 / LMD-9).